The following is a 235-amino-acid chain: MTELARLKFYATQPHSCSYLPDEQATTLFLDPSQPMDVHVYADLSEMGFRRSGDHLYRPHCQNCNACVPARIPAVRFIPNRQQRRILKRNADLTVSAVRPVFKEEYFDLYRRYIEQRHADGDMYPPSRDQFSTFLVRDLPFCWFYEFRLEGRLMAVAVCDLLPNGLSAVYTFYEPDEERRSLGRYAILWQITEALRQNLDAVYLGYWIKNCKKMNYKTQYRPIELLINQRWVTLN.

Belongs to the R-transferase family. Bpt subfamily.

The protein localises to the cytoplasm. It catalyses the reaction N-terminal L-glutamyl-[protein] + L-leucyl-tRNA(Leu) = N-terminal L-leucyl-L-glutamyl-[protein] + tRNA(Leu) + H(+). The enzyme catalyses N-terminal L-aspartyl-[protein] + L-leucyl-tRNA(Leu) = N-terminal L-leucyl-L-aspartyl-[protein] + tRNA(Leu) + H(+). Functionally, functions in the N-end rule pathway of protein degradation where it conjugates Leu from its aminoacyl-tRNA to the N-termini of proteins containing an N-terminal aspartate or glutamate. In Pseudomonas entomophila (strain L48), this protein is Aspartate/glutamate leucyltransferase.